The primary structure comprises 144 residues: D-aminoacyl-tRNA deacylase (144 aa).

Residues 136-137 (GP) carry the Gly-cisPro motif, important for rejection of L-amino acids motif.

The protein belongs to the DTD family. As to quaternary structure, homodimer.

It localises to the cytoplasm. It carries out the reaction glycyl-tRNA(Ala) + H2O = tRNA(Ala) + glycine + H(+). It catalyses the reaction a D-aminoacyl-tRNA + H2O = a tRNA + a D-alpha-amino acid + H(+). Functionally, an aminoacyl-tRNA editing enzyme that deacylates mischarged D-aminoacyl-tRNAs. Also deacylates mischarged glycyl-tRNA(Ala), protecting cells against glycine mischarging by AlaRS. Acts via tRNA-based rather than protein-based catalysis; rejects L-amino acids rather than detecting D-amino acids in the active site. By recycling D-aminoacyl-tRNA to D-amino acids and free tRNA molecules, this enzyme counteracts the toxicity associated with the formation of D-aminoacyl-tRNA entities in vivo and helps enforce protein L-homochirality. This chain is D-aminoacyl-tRNA deacylase, found in Corynebacterium glutamicum (strain R).